The following is a 115-amino-acid chain: NADH-ubiquinone oxidoreductase chain 3 (115 aa).

3 helical membrane passes run 4 to 24 (LMAL…AFWL), 55 to 75 (FFLV…LLPL), and 86 to 106 (TMML…AYEW).

It belongs to the complex I subunit 3 family. Core subunit of respiratory chain NADH dehydrogenase (Complex I) which is composed of 45 different subunits. Interacts with TMEM186. Interacts with TMEM242.

The protein resides in the mitochondrion inner membrane. The enzyme catalyses a ubiquinone + NADH + 5 H(+)(in) = a ubiquinol + NAD(+) + 4 H(+)(out). In terms of biological role, core subunit of the mitochondrial membrane respiratory chain NADH dehydrogenase (Complex I) which catalyzes electron transfer from NADH through the respiratory chain, using ubiquinone as an electron acceptor. Essential for the catalytic activity of complex I. The polypeptide is NADH-ubiquinone oxidoreductase chain 3 (Peromyscus gossypinus (Cotton deermouse)).